Consider the following 101-residue polypeptide: Small ribosomal subunit protein uS14 (101 aa).

The protein belongs to the universal ribosomal protein uS14 family. In terms of assembly, part of the 30S ribosomal subunit. Contacts proteins S3 and S10.

In terms of biological role, binds 16S rRNA, required for the assembly of 30S particles and may also be responsible for determining the conformation of the 16S rRNA at the A site. This is Small ribosomal subunit protein uS14 from Burkholderia lata (strain ATCC 17760 / DSM 23089 / LMG 22485 / NCIMB 9086 / R18194 / 383).